A 366-amino-acid polypeptide reads, in one-letter code: Methylthioribose-1-phosphate isomerase (366 aa).

The active-site Proton donor is Asp260.

The protein belongs to the eIF-2B alpha/beta/delta subunits family. MtnA subfamily.

The protein localises to the cytoplasm. It is found in the nucleus. It carries out the reaction 5-(methylsulfanyl)-alpha-D-ribose 1-phosphate = 5-(methylsulfanyl)-D-ribulose 1-phosphate. The protein operates within amino-acid biosynthesis; L-methionine biosynthesis via salvage pathway; L-methionine from S-methyl-5-thio-alpha-D-ribose 1-phosphate: step 1/6. In terms of biological role, catalyzes the interconversion of methylthioribose-1-phosphate (MTR-1-P) into methylthioribulose-1-phosphate (MTRu-1-P). This chain is Methylthioribose-1-phosphate isomerase, found in Caenorhabditis briggsae.